A 425-amino-acid polypeptide reads, in one-letter code: Glutamyl-tRNA reductase (425 aa).

Substrate contacts are provided by residues 49–52 (TCNR), Ser-109, 114–116 (EGQ), and Gln-120. Residue Cys-50 is the Nucleophile of the active site. 189-194 (GAGETG) contacts NADP(+).

The protein belongs to the glutamyl-tRNA reductase family. As to quaternary structure, homodimer.

The enzyme catalyses (S)-4-amino-5-oxopentanoate + tRNA(Glu) + NADP(+) = L-glutamyl-tRNA(Glu) + NADPH + H(+). It functions in the pathway porphyrin-containing compound metabolism; protoporphyrin-IX biosynthesis; 5-aminolevulinate from L-glutamyl-tRNA(Glu): step 1/2. Its pathway is porphyrin-containing compound metabolism; chlorophyll biosynthesis. Functionally, catalyzes the NADPH-dependent reduction of glutamyl-tRNA(Glu) to glutamate 1-semialdehyde (GSA). The polypeptide is Glutamyl-tRNA reductase (Chlorobium phaeobacteroides (strain DSM 266 / SMG 266 / 2430)).